The primary structure comprises 168 residues: Vitelline membrane protein Vm26Ab (168 aa).

Residues 1 to 23 form the signal peptide; the sequence is MAFNFGHLLIAGLVALSAVSSET. Positions 24-42 are cleaved as a propeptide — removed between stage 11 and 14 of oogenesis; the sequence is IQLQPTQGILIPAPLAENI. The essential for N-terminal propeptide removal. Potential serine protease cleavage site stretch occupies residues 43–46; sequence RVSR. Residues 52–119 are 8 X 8 AA approximate repeats of P-[AS]-Y-S-A-P-A-[AS]; that stretch reads YGAAPAAPSY…PAYSAPASIP (68 aa). Residues 55-58 form a 1; half-length repeat; that stretch reads APAA. Residues 59-66 form repeat 2; it reads PSYSAPAA. One copy of the 3; approximate repeat lies at 70–77; it reads QAYSAPAA. Repeat copies occupy residues 78–85, 86–93, 94–101, 102–109, and 110–117. One can recognise a VM domain in the interval 117-154; it reads SIPSPPCPKNYLFSCQPSLQPVPCSAPAQSYGSAGAYS. A propeptide spans 155 to 168 (removed between stage 9 and 12 of oogenesis); the sequence is QYVPQYAVPFVREL.

It belongs to the vitelline membrane protein family. In terms of assembly, interacts with vml and Vm26Aa; forms part of a disulfide-linked network within the vitelline membrane of stage 10 egg chambers. Post-translationally, proteolytically processed after secretion into the perivitelline space. Undergoes several proteolytic processing steps during formation of the vitelline membrane; an initial processing step removing a C-terminal propeptide occurs between stage 9 and 12 of oogenesis while a second removing a N-terminal propeptide occurs between stage 11 and 14. Becomes part of a disulfide-linked network including other vitelline membrane proteins, including vml and Vm26Aa, during vitelline membrane biogenesis and maturation. Cys-123, Cys-131 and Cys-140 are involved in disulfide network formation, with Cys-131 being the most important. Undergoes both disulfide and non-disulfide cross-linking upon incorporation into the vitelline membrane. Follicle cells.

The protein resides in the secreted. Its subcellular location is the extracellular space. The protein localises to the extracellular matrix. Functionally, major early eggshell protein secreted by follicle cells into the perivitelline space and incorporated into the vitelline membrane. Involved in vitelline membrane biogenesis; forms a cross-linked network with other vitelline membrane components. The polypeptide is Vitelline membrane protein Vm26Ab (Drosophila melanogaster (Fruit fly)).